Here is a 1471-residue protein sequence, read N- to C-terminus: ABC multidrug transporter F (1471 aa).

The segment covering 1 to 19 (MALNSTDNRWSTGEDTPSE) has biased composition (polar residues). Positions 1–40 (MALNSTDNRWSTGEDTPSEAQLPDGEERLDAAPDEKVTAE) are disordered. Asn4 is a glycosylation site (N-linked (GlcNAc...) asparagine). The span at 25–40 (GEERLDAAPDEKVTAE) shows a compositional bias: basic and acidic residues. N-linked (GlcNAc...) asparagine glycosylation is found at Asn71 and Asn311. One can recognise an ABC transporter 1 domain in the interval 133 to 387 (LKVPTMVRQA…FEQLGFQCPE (255 aa)). Residues 498 to 518 (VTLAMLIGNFFEALIIASIFY) form a helical membrane-spanning segment. Residue Asn519 is glycosylated (N-linked (GlcNAc...) asparagine). Transmembrane regions (helical) follow at residues 532–552 (ALLFMMVLLNAFASVLEILTL), 578–598 (FIMSLPYKFVNSSLVNLTLYF), 607–627 (GPFFFFLLISTSMMLAMSMFF), 641–661 (LAPSSIILLALVLYTGFTIPV), and 751–771 (IIIAMTVFLAVCHFVTTELVA). Residues 791-819 (RAKQGQRDEEQPSASAVPSEKYSEAPTPV) form a disordered region. Residues 829–1071 (FHWEDVCYDV…TLMDYFVRNG (243 aa)) form the ABC transporter 2 domain. Residue Asn842 is glycosylated (N-linked (GlcNAc...) asparagine). Position 865 to 872 (865 to 872 (GVSGAGKT)) interacts with ATP. A run of 5 helical transmembrane segments spans residues 1167–1187 (YLYSKAILTVGSSIFIGFSFF), 1201–1221 (FGVFVFLFVVIQLIFQIIPTF), 1252–1272 (FAWNTIAAVLCFLAWFYPVGL), 1288–1308 (LVFLIIWATFLFASSFAHLLI), and 1326–1346 (IMMYAFCGILAGPHALPGFWI). Asn1386, Asn1422, and Asn1429 each carry an N-linked (GlcNAc...) asparagine glycan. The helical transmembrane segment at 1441–1461 (FGLLWVYVAVNTFGAVFLYWL) threads the bilayer.

It belongs to the ABC transporter superfamily. ABCG family. PDR (TC 3.A.1.205) subfamily.

The protein localises to the cell membrane. The catalysed reaction is fluconazole(in) + ATP + H2O = fluconazole(out) + ADP + phosphate + H(+). It catalyses the reaction itraconazole(in) + ATP + H2O = itraconazole(out) + ADP + phosphate + H(+). With respect to regulation, the efflux inhibitor FK506 impairs the transport activity. Pleiotropic ABC efflux transporter that shows a strong substrate specificity for the azole class of drugs such as lotrimazole (CLT), fluconazole (FLC), itraconazole (ITC), ketoconazole (KTC), posaconazole (POS), econazole (ECON), metconazole (MET), miconazole (MCZ), prochloraz (PCLZ), and tebuconazole (TEBZ). The chain is ABC multidrug transporter F from Aspergillus fumigatus (strain ATCC MYA-4609 / CBS 101355 / FGSC A1100 / Af293) (Neosartorya fumigata).